The primary structure comprises 388 residues: Chaperone protein DnaJ 1 (388 aa).

Residues 10–74 enclose the J domain; sequence DFYKELGVSS…VKRKEYDETR (65 aa). Residues 159–237 form a CR-type zinc finger; it reads GVAMPLRLTS…CKGTGVTTRT (79 aa). Zn(2+) is bound by residues Cys-172, Cys-175, Cys-189, Cys-192, Cys-211, Cys-214, Cys-225, and Cys-228. CXXCXGXG motif repeat units follow at residues 172-179, 189-196, 211-218, and 225-232; these read CTNCHGSG, CSTCNGSG, CTECRGSG, and CEECKGTG.

This sequence belongs to the DnaJ family. Homodimer. Requires Zn(2+) as cofactor.

It localises to the cytoplasm. Functionally, participates actively in the response to hyperosmotic and heat shock by preventing the aggregation of stress-denatured proteins and by disaggregating proteins, also in an autonomous, DnaK-independent fashion. Unfolded proteins bind initially to DnaJ; upon interaction with the DnaJ-bound protein, DnaK hydrolyzes its bound ATP, resulting in the formation of a stable complex. GrpE releases ADP from DnaK; ATP binding to DnaK triggers the release of the substrate protein, thus completing the reaction cycle. Several rounds of ATP-dependent interactions between DnaJ, DnaK and GrpE are required for fully efficient folding. Also involved, together with DnaK and GrpE, in the DNA replication of plasmids through activation of initiation proteins. The chain is Chaperone protein DnaJ 1 from Mycobacterium leprae (strain TN).